The following is a 453-amino-acid chain: Tetrahydroanabasine acetyltransferase (453 aa).

Active-site proton acceptor residues include His163 and Asp388.

This sequence belongs to the plant acyltransferase family. Monomer.

The catalysed reaction is tetrahydroanabasine + acetyl-CoA = ammodendrine + CoA. It participates in alkaloid biosynthesis. In terms of biological role, tetrahydroanabasine acetyltransferase involved in the accumulation of quinolizidine type antinutritional alkaloids (QAs). QAs impart a bitter taste to plants, acting as repellents and toxicants for herbivores and predators, and possess a variety of pharmacological effects, including sedative, anticonvulsant, anti-inflammatory, antiviral, antitumor, antipyretic, anti-hepatitis B, antifibrotic, antiallergic, antidiarrheal, analgesic and antimicrobial activities. Mediates the conversion of tetrahydroanabasine into ammodendrine. The sequence is that of Tetrahydroanabasine acetyltransferase from Lupinus angustifolius (Narrow-leaved blue lupine).